The chain runs to 599 residues: UvrABC system protein C (599 aa).

The region spanning 15-93 (PCPGVYRMLD…IKALQPRYNV (79 aa)) is the GIY-YIG domain. The UVR domain occupies 202-237 (QQVINELVIRMEEASGQLAFEQAAYYRDRIASLRQI).

It belongs to the UvrC family. In terms of assembly, interacts with UvrB in an incision complex.

It localises to the cytoplasm. The UvrABC repair system catalyzes the recognition and processing of DNA lesions. UvrC both incises the 5' and 3' sides of the lesion. The N-terminal half is responsible for the 3' incision and the C-terminal half is responsible for the 5' incision. The polypeptide is UvrABC system protein C (Nitrosococcus oceani (strain ATCC 19707 / BCRC 17464 / JCM 30415 / NCIMB 11848 / C-107)).